The sequence spans 136 residues: Small ribosomal subunit protein uS9 (136 aa).

Residues 111 to 136 are disordered; sequence TRDPRMKERKKTGQPGARKRFQFSKR. Residues 117 to 136 are compositionally biased toward basic residues; it reads KERKKTGQPGARKRFQFSKR.

It belongs to the universal ribosomal protein uS9 family.

This chain is Small ribosomal subunit protein uS9, found in Methylacidiphilum infernorum (isolate V4) (Methylokorus infernorum (strain V4)).